We begin with the raw amino-acid sequence, 352 residues long: Ion-translocating oxidoreductase complex subunit D (352 aa).

Transmembrane regions (helical) follow at residues 20–40, 42–62, 89–109, and 123–143; these read IMLLVLLAAVPGIAAQLWFFG, GTLVQILLASVSALLAEALVL, IPPLAPWWMVVLGTVFAVIIA, and PAMIGYVVLLISFPVQMTSWL. Threonine 187 is subject to FMN phosphoryl threonine. The next 5 helical transmembrane spans lie at 214–234, 242–262, 267–287, 301–321, and 322–342; these read ILAGAGWQWVNLAWLAGGVWL, WHIPLSFLVTLALCATLGWLF, LAAPQIHLLSGATMLGAFFIL, LIFGALAGLLVWMIRSFGGYP, and DGVAFAVLLANITVPLIDYYT.

Belongs to the NqrB/RnfD family. The complex is composed of six subunits: RsxA, RsxB, RsxC, RsxD, RsxE and RsxG. FMN serves as cofactor.

It localises to the cell inner membrane. Part of a membrane-bound complex that couples electron transfer with translocation of ions across the membrane. Required to maintain the reduced state of SoxR. The chain is Ion-translocating oxidoreductase complex subunit D from Escherichia coli O81 (strain ED1a).